The primary structure comprises 220 residues: Deoxyribose-phosphate aldolase (220 aa).

Aspartate 89 (proton donor/acceptor) is an active-site residue. Catalysis depends on lysine 151, which acts as the Schiff-base intermediate with acetaldehyde. The active-site Proton donor/acceptor is lysine 180.

The protein belongs to the DeoC/FbaB aldolase family. DeoC type 1 subfamily.

The protein resides in the cytoplasm. It catalyses the reaction 2-deoxy-D-ribose 5-phosphate = D-glyceraldehyde 3-phosphate + acetaldehyde. Its pathway is carbohydrate degradation; 2-deoxy-D-ribose 1-phosphate degradation; D-glyceraldehyde 3-phosphate and acetaldehyde from 2-deoxy-alpha-D-ribose 1-phosphate: step 2/2. Catalyzes a reversible aldol reaction between acetaldehyde and D-glyceraldehyde 3-phosphate to generate 2-deoxy-D-ribose 5-phosphate. The sequence is that of Deoxyribose-phosphate aldolase from Streptococcus gordonii (strain Challis / ATCC 35105 / BCRC 15272 / CH1 / DL1 / V288).